Reading from the N-terminus, the 766-residue chain is Dipeptidyl peptidase 4 (766 aa).

The Cytoplasmic segment spans residues 1–6; sequence MKTPWK. The helical; Signal-anchor for type II membrane protein transmembrane segment at 7–27 threads the bilayer; that stretch reads VLLGLLGIAALVTVITVPVVL. Over 28 to 766 the chain is Extracellular; it reads LNKGTDDAAA…HFLKQCFSLP (739 aa). N85, N92, N150, N179, N219, N229, N279, and N321 each carry an N-linked (GlcNAc...) asparagine glycan. 3 disulfides stabilise this stretch: C385/C394, C444/C447, and C454/C472. The active-site Charge relay system is the S630. A disulfide bridge links C649 with C762. N685 carries an N-linked (GlcNAc...) asparagine glycan. Residues D708 and H740 each act as charge relay system in the active site.

It belongs to the peptidase S9B family. DPPIV subfamily. As to quaternary structure, monomer. Homodimer. Heterodimer with Seprase (FAP). Requires homodimerization for optimal dipeptidyl peptidase activity and T-cell costimulation. Found in a membrane raft complex, at least composed of BCL10, CARD11, DPP4 and IKBKB. Associates with collagen. Interacts with PTPRC; the interaction is enhanced in an interleukin-12-dependent manner in activated lymphocytes. Interacts (via extracellular domain) with ADA; does not inhibit its dipeptidyl peptidase activity. Interacts with CAV1 (via the N-terminus); the interaction is direct. Interacts (via cytoplasmic tail) with CARD11 (via PDZ domain); its homodimerization is necessary for interaction with CARD11. Interacts with IGF2R; the interaction is direct. Interacts with GPC3. The soluble form (Dipeptidyl peptidase 4 soluble form also named SDPP) derives from the membrane form (Dipeptidyl peptidase 4 membrane form also named MDPP) by proteolytic processing. In terms of processing, N- and O-Glycosylated. Post-translationally, phosphorylated. Mannose 6-phosphate residues in the carbohydrate moiety are necessary for interaction with IGF2R in activated T-cells. Mannose 6-phosphorylation is induced during T-cell activation.

It is found in the secreted. The protein resides in the cell membrane. Its subcellular location is the apical cell membrane. It localises to the cell projection. The protein localises to the invadopodium membrane. It is found in the lamellipodium membrane. The protein resides in the cell junction. Its subcellular location is the membrane raft. The enzyme catalyses Release of an N-terminal dipeptide, Xaa-Yaa-|-Zaa-, from a polypeptide, preferentially when Yaa is Pro, provided Zaa is neither Pro nor hydroxyproline.. Its activity is regulated as follows. Inhibited by GPC3 and diprotin A. In terms of biological role, cell surface glycoprotein receptor involved in the costimulatory signal essential for T-cell receptor (TCR)-mediated T-cell activation. Acts as a positive regulator of T-cell coactivation, by binding at least ADA, CAV1, IGF2R, and PTPRC. Its binding to CAV1 and CARD11 induces T-cell proliferation and NF-kappa-B activation in a T-cell receptor/CD3-dependent manner. Its interaction with ADA also regulates lymphocyte-epithelial cell adhesion. In association with FAP is involved in the pericellular proteolysis of the extracellular matrix (ECM), the migration and invasion of endothelial cells into the ECM. May be involved in the promotion of lymphatic endothelial cells adhesion, migration and tube formation. When overexpressed, enhanced cell proliferation, a process inhibited by GPC3. Also acts as a serine exopeptidase with a dipeptidyl peptidase activity that regulates various physiological processes by cleaving peptides in the circulation, including many chemokines, mitogenic growth factors, neuropeptides and peptide hormones such as brain natriuretic peptide 32. Removes N-terminal dipeptides sequentially from polypeptides having unsubstituted N-termini provided that the penultimate residue is proline. The polypeptide is Dipeptidyl peptidase 4 (DPP4) (Sus scrofa (Pig)).